The following is a 507-amino-acid chain: Maturase K (507 aa).

Belongs to the intron maturase 2 family. MatK subfamily.

It localises to the plastid. Its subcellular location is the chloroplast. In terms of biological role, usually encoded in the trnK tRNA gene intron. Probably assists in splicing its own and other chloroplast group II introns. The sequence is that of Maturase K from Fagopyrum esculentum (Common buckwheat).